Consider the following 390-residue polypeptide: MAQKEGLPAGRLSAMVIDEDKCHADSTSYMLSAELNFSVTVFTSPIKALDFLQNHAEGVDLVLADVHMEEMNGFDFLKVARELHKSIQVIMMSTETTMYTMKRCVKLGAQFLVNKPLDAGTIKNLWQYVDLKVLRMEKIKDLLQGIGDESTCANETNSLAENPKNDTKKKYYLMWTPHLQKKFLHALQILGKDASPKNIKKIMGVDNIDCRQIAAHLQKHRLRLTKDLKKASFTTDTSKDESNSRIGPAESHHVCRNASTLQPRSNTQPTETTMQILSEDAEYDDVYAAMRRALQYGIVFDESKHSSDPSGDEDEQVVVGGDQDGCANEANDIDSSGDHHQVAAVVTKPCNANASQEIINKMTNSDGMQATKGSKAAVFRLVDYSESDSD.

The 118-residue stretch at 13–130 (SAMVIDEDKC…TIKNLWQYVD (118 aa)) folds into the Response regulatory domain. Residue aspartate 65 is modified to 4-aspartylphosphate. Positions 169 to 226 (KKYYLMWTPHLQKKFLHALQILGKDASPKNIKKIMGVDNIDCRQIAAHLQKHRLRLTK) form a DNA-binding region, myb-like GARP. Disordered stretches follow at residues 233-271 (FTTD…QPTE) and 303-339 (SKHS…SGDH). The segment covering 257–271 (NASTLQPRSNTQPTE) has biased composition (polar residues).

It belongs to the ARR family. Type-B subfamily. Post-translationally, two-component system major event consists of a His-to-Asp phosphorelay between a sensor histidine kinase (HK) and a response regulator (RR). In plants, the His-to-Asp phosphorelay involves an additional intermediate named Histidine-containing phosphotransfer protein (HPt). This multistep phosphorelay consists of a His-Asp-His-Asp sequential transfer of a phosphate group between first a His and an Asp of the HK protein, followed by the transfer to a conserved His of the HPt protein and finally the transfer to an Asp in the receiver domain of the RR protein.

The protein resides in the cytoplasm. It is found in the cytosol. It localises to the nucleus. Its function is as follows. Transcriptional activator that binds specific DNA sequence. Functions as a response regulator involved in His-to-Asp phosphorelay signal transduction system. Phosphorylation of the Asp residue in the receiver domain activates the ability of the protein to promote the transcription of target genes. May directly activate some type-A response regulators in response to cytokinins. Functions as a response regulator in response to cytokinins. The protein is Two-component response regulator ORR29 of Oryza sativa subsp. japonica (Rice).